The primary structure comprises 388 residues: FMRFamide neuropeptides (388 aa).

An N-terminal signal peptide occupies residues 1–21 (MVAPLLVFLFSLQLCHTTSWA). Positions 22–172 (YVGGNSLNSN…SNHQVIRDSR (151 aa)) are excised as a propeptide. A disordered region spans residues 40–74 (FPAGTSNEVPEDAANGQDDNDDSQLTEPNDNNAPL). The segment covering 64-74 (LTEPNDNNAPL) has biased composition (polar residues). Phenylalanine 179, phenylalanine 196, phenylalanine 208, phenylalanine 219, phenylalanine 230, phenylalanine 241, phenylalanine 253, phenylalanine 265, phenylalanine 277, phenylalanine 289, phenylalanine 301, phenylalanine 313, phenylalanine 325, phenylalanine 337, phenylalanine 346, phenylalanine 359, and phenylalanine 372 each carry phenylalanine amide. The disordered stretch occupies residues 360 to 388 (GRTPTQSSDFMRFGKSLDKSENKTSDLQK). Basic and acidic residues predominate over residues 374-388 (KSLDKSENKTSDLQK). Positions 375-388 (SLDKSENKTSDLQK) are excised as a propeptide.

It belongs to the FARP (FMRFamide related peptide) family. In terms of tissue distribution, in the brain, expressed in 2 large cells in the lateral neurons in each optic lobe, 2 slightly bigger cells on both sides of the tritocerebrum, around 14 small cells in the dorsal area, around 13 cells in the subesophageal ganglion, and in the central brain.

It is found in the secreted. The sequence is that of FMRFamide neuropeptides from Musca domestica (House fly).